Consider the following 447-residue polypeptide: Rab GDP dissociation inhibitor alpha (447 aa).

It belongs to the Rab GDI family. As to quaternary structure, interacts with RHOH. Interacts with the non-phosphorylated forms of RAB1A, RAB3A, RAB5A, RAB5B, RAB5C, RAB8A, RAB8B, RAB10, RAB12, RAB35, and RAB43. As to expression, brain; predominant in neural and sensory tissues.

Its subcellular location is the cytoplasm. It localises to the golgi apparatus. The protein resides in the trans-Golgi network. In terms of biological role, regulates the GDP/GTP exchange reaction of most Rab proteins by inhibiting the dissociation of GDP from them, and the subsequent binding of GTP to them. Promotes the dissociation of GDP-bound Rab proteins from the membrane and inhibits their activation. Promotes the dissociation of RAB1A, RAB3A, RAB5A and RAB10 from membranes. The protein is Rab GDP dissociation inhibitor alpha (GDI1) of Homo sapiens (Human).